A 320-amino-acid polypeptide reads, in one-letter code: tRNA(Ile)-lysidine synthase, chloroplastic (320 aa).

31 to 36 serves as a coordination point for ATP; that stretch reads SGGKDS.

It belongs to the tRNA(Ile)-lysidine synthase family.

The protein resides in the plastid. The protein localises to the chloroplast. It carries out the reaction cytidine(34) in tRNA(Ile2) + L-lysine + ATP = lysidine(34) in tRNA(Ile2) + AMP + diphosphate + H(+). Ligates lysine onto the cytidine present at position 34 of the AUA codon-specific tRNA(Ile) that contains the anticodon CAU, in an ATP-dependent manner. Cytidine is converted to lysidine, thus changing the amino acid specificity of the tRNA from methionine to isoleucine. In Gracilaria tenuistipitata var. liui (Red alga), this protein is tRNA(Ile)-lysidine synthase, chloroplastic.